A 432-amino-acid chain; its full sequence is Cyclic GMP-AMP synthase-like receptor (432 aa).

ATP-binding positions include Ser59 and 71–73 (EFD). Mg(2+)-binding residues include Glu71, Asp73, and Asp205. Residues Asp205 and 255 to 262 (KQTCSVLE) each bind GTP. ATP is bound by residues 259-262 (SVLE), Lys284, and 303-307 (TYALK).

Belongs to the mab-21 family. It depends on Mg(2+) as a cofactor. Requires Mn(2+) as cofactor.

It carries out the reaction GTP + ATP = 2',3'-cGAMP + 2 diphosphate. The catalysed reaction is GTP + ATP = pppGp(2'-5')A + diphosphate. It catalyses the reaction pppGp(2'-5')A = 2',3'-cGAMP + diphosphate. Nucleotidyltransferase that catalyzes the formation of cyclic GMP-AMP (2',3'-cGAMP) from ATP and GTP and plays a key role in innate immunity. Directly binds some unknown ligand, activating the nucleotidyltransferase activity, leading to synthesis of 2',3'-cGAMP, a second messenger that binds to and activates Sting, thereby triggering the immune response via activation of the NF-kappa-B transcription factor. This chain is Cyclic GMP-AMP synthase-like receptor, found in Pocillopora damicornis (Cauliflower coral).